Consider the following 306-residue polypeptide: Pentalenolactone F synthase (306 aa).

His110 and Asp112 together coordinate Fe cation. Thr138 and Trp258 together coordinate 2-oxoglutarate. His273 contacts Fe cation. Position 284 (Arg284) interacts with 2-oxoglutarate.

It belongs to the TfdA dioxygenase family. Requires Fe(2+) as cofactor.

It carries out the reaction pentalenolactone D + 2 2-oxoglutarate + 2 O2 = pentalenolactone F + 2 succinate + 2 CO2 + H2O. The protein operates within antibiotic biosynthesis; neopentalenolactone biosynthesis. With respect to regulation, activated by ascorbate. Catalyzes the Fe(2+) and alpha-ketoglutarate-dependent oxidation of pentalenolactone D to pentalenolactone F. Also able to catalyze the oxidation of pentalenolactone D to pentalenolactone E. In presence of neopentalenolactone D, mediates production of PL308 and possibly neopentalenolactone E. The protein is Pentalenolactone F synthase (ptlD) of Streptomyces avermitilis (strain ATCC 31267 / DSM 46492 / JCM 5070 / NBRC 14893 / NCIMB 12804 / NRRL 8165 / MA-4680).